The chain runs to 176 residues: Ribosome maturation factor RimM (176 aa).

A PRC barrel domain is found at 97–176; sequence EDEFYWRDLI…QILVDWDPDF (80 aa).

Belongs to the RimM family. In terms of assembly, binds ribosomal protein uS19.

It is found in the cytoplasm. In terms of biological role, an accessory protein needed during the final step in the assembly of 30S ribosomal subunit, possibly for assembly of the head region. Essential for efficient processing of 16S rRNA. May be needed both before and after RbfA during the maturation of 16S rRNA. It has affinity for free ribosomal 30S subunits but not for 70S ribosomes. The sequence is that of Ribosome maturation factor RimM from Shewanella halifaxensis (strain HAW-EB4).